The following is a 274-amino-acid chain: Acetyl-coenzyme A carboxylase carboxyl transferase subunit beta (274 aa).

Positions 16–274 (LWTKCEECKN…LLNLLFYKNA (259 aa)) constitute a CoA carboxyltransferase N-terminal domain. 4 residues coordinate Zn(2+): cysteine 20, cysteine 23, cysteine 39, and cysteine 42. The segment at 20–42 (CEECKNILLAQELETNFYVCPKC) adopts a C4-type zinc-finger fold.

This sequence belongs to the AccD/PCCB family. Acetyl-CoA carboxylase is a heterohexamer composed of biotin carboxyl carrier protein (AccB), biotin carboxylase (AccC) and two subunits each of ACCase subunit alpha (AccA) and ACCase subunit beta (AccD). Zn(2+) is required as a cofactor.

The protein localises to the cytoplasm. The enzyme catalyses N(6)-carboxybiotinyl-L-lysyl-[protein] + acetyl-CoA = N(6)-biotinyl-L-lysyl-[protein] + malonyl-CoA. It functions in the pathway lipid metabolism; malonyl-CoA biosynthesis; malonyl-CoA from acetyl-CoA: step 1/1. Its function is as follows. Component of the acetyl coenzyme A carboxylase (ACC) complex. Biotin carboxylase (BC) catalyzes the carboxylation of biotin on its carrier protein (BCCP) and then the CO(2) group is transferred by the transcarboxylase to acetyl-CoA to form malonyl-CoA. The sequence is that of Acetyl-coenzyme A carboxylase carboxyl transferase subunit beta from Hydrogenobaculum sp. (strain Y04AAS1).